A 292-amino-acid chain; its full sequence is Secreted frizzled-related protein 2 (292 aa).

The first 20 residues, 1-20 (MPRRLCALLLLASQCLGSTA), serve as a signal peptide directing secretion. The FZ domain occupies 32–152 (YKRSNCKPIP…PKDNDLCIPL (121 aa)). 7 disulfides stabilise this stretch: C37-C100, C47-C93, C84-C122, C111-C149, C115-C139, C169-C242, and C187-C292. Positions 169–292 (CDACKNKNED…FSRSIRKLQC (124 aa)) constitute an NTR domain.

The protein belongs to the secreted frizzled-related protein (sFRP) family.

The protein resides in the secreted. In terms of biological role, soluble frizzled-related proteins (sFRPS) function as modulators of Wnt signaling through direct interaction with Wnts. They have a role in regulating cell growth and differentiation in specific cell types. SFRP2 appears to be associated with myogenesis. The polypeptide is Secreted frizzled-related protein 2 (SFRP2) (Gallus gallus (Chicken)).